A 343-amino-acid chain; its full sequence is Transmembrane protein 120A (343 aa).

Residues 1 to 132 lie on the Cytoplasmic side of the membrane; it reads MQSPPPDPLG…KQAKFAYKDE (132 aa). Residue Lys130 participates in CoA binding. A helical membrane pass occupies residues 133 to 152; it reads YEKFKLYLTIILIVISFTCR. The Extracellular segment spans residues 153 to 158; that stretch reads FLLNSR. The helical transmembrane segment at 159–177 threads the bilayer; the sequence is VTDAAFNFLLVWYYCTLTI. The Cytoplasmic portion of the chain corresponds to 178 to 190; that stretch reads RESILINNGSRIK. Residues Ser187 and Arg188 each coordinate CoA. The helical transmembrane segment at 191–209 threads the bilayer; the sequence is GWWVFHHYVSTFLSGVMLT. Residues 210 to 218 are Extracellular-facing; the sequence is WPDGLMYQK. A helical transmembrane segment spans residues 219–240; sequence FRNQFLSFSMYQSFVQFLQYYY. The CoA site is built by Gln237, Tyr240, Gln241, and His283. Residues 241 to 270 are Cytoplasmic-facing; sequence QSGCLYRLRALGERHTMDLTVEGFQSWMWR. A helical membrane pass occupies residues 271–294; the sequence is GLTFLLPFLFFGHFWQLFNALTLF. The Extracellular segment spans residues 295–304; that stretch reads NLARDPECKE. The helical transmembrane segment at 305–330 threads the bilayer; that stretch reads WQVLMCGLPFLLLFLGNFFTTLRVVH. The Cytoplasmic segment spans residues 331 to 343; the sequence is QKFHSQQHGSKKD. Lys332 is a binding site for CoA.

It belongs to the TMEM120 family. In terms of assembly, homodimer. Forms heterooligomer with TMEM120B. Interacts with PKD2; TMEM120A inhibits PKD2 channel activity through the physical association of PKD2 with TMEM120A.

It localises to the cell membrane. It is found in the nucleus inner membrane. The protein localises to the endoplasmic reticulum. Its function is as follows. Multifunctional protein involved in mechanosensation, and plays an essential role in lipid metabolism and adipocyte differentiation. May function as a potential ion channel involved in sensing mechanical stimuli. Mediates the mechanosensitivity of the PKD2-TMEM120A channel complex through direct physical interaction. TMEM120A seems to affect mechanosensation by inhibiting PIEZO2 channels, possibly by altering cellular lipid content. TMEM120A is structurally similar to a lipid-modifying enzyme, ELOVL7, and contains a bound coenzyme A molecule, which suggests it might function as an enzyme in lipid metabolism. Additionnaly, implicated in innate immune response against Zika virus. Acts as a key activator of the antiviral signaling involving STING1. The sequence is that of Transmembrane protein 120A from Rattus norvegicus (Rat).